Here is a 321-residue protein sequence, read N- to C-terminus: Peptidase 1 (321 aa).

A signal peptide spans 1–18 (MKFVLAIASLLVLSTVYA). Positions 19 to 98 (RPASIKTFEE…LKTQFDLNAE (80 aa)) are cleaved as a propeptide — activation peptide. 3 cysteine pairs are disulfide-bonded: Cys102/Cys216, Cys130/Cys170, and Cys164/Cys202. The active site involves Cys133. Residue Asn151 is glycosylated (N-linked (GlcNAc...) asparagine). Active-site residues include His269 and Arg288.

Belongs to the peptidase C1 family. Monomer.

Its subcellular location is the secreted. It catalyses the reaction Broad endopeptidase specificity.. Functionally, thiol protease that hydrolyzes proteins, with a preference for Phe or basic residues. The chain is Peptidase 1 (DERF1) from Dermatophagoides farinae (American house dust mite).